A 132-amino-acid chain; its full sequence is MSVNDPLGDMLTRIRNAQLRGKSTVSSPASKLRAWVLDVLQAEGYIRGYEKKETENGQGELVISLKYFEGTPVIRELKRVSKPGRRVYMATKDLPSVRNGLGVSIISTPKGVMSDASARSANVGGEVLCTVF.

The protein belongs to the universal ribosomal protein uS8 family. In terms of assembly, part of the 30S ribosomal subunit. Contacts proteins S5 and S12.

In terms of biological role, one of the primary rRNA binding proteins, it binds directly to 16S rRNA central domain where it helps coordinate assembly of the platform of the 30S subunit. This Cereibacter sphaeroides (strain ATCC 17025 / ATH 2.4.3) (Rhodobacter sphaeroides) protein is Small ribosomal subunit protein uS8.